A 137-amino-acid polypeptide reads, in one-letter code: Large ribosomal subunit protein uL16 (137 aa).

It belongs to the universal ribosomal protein uL16 family. Part of the 50S ribosomal subunit.

In terms of biological role, binds 23S rRNA and is also seen to make contacts with the A and possibly P site tRNAs. This is Large ribosomal subunit protein uL16 from Streptococcus sanguinis (strain SK36).